The chain runs to 263 residues: Flagellar L-ring protein (263 aa).

The signal sequence occupies residues Met-1–Gly-15. Cys-16 is lipidated: N-palmitoyl cysteine. Residue Cys-16 is the site of S-diacylglycerol cysteine attachment. Residues Lys-123–Gly-143 form a disordered region.

This sequence belongs to the FlgH family. In terms of assembly, the basal body constitutes a major portion of the flagellar organelle and consists of four rings (L,P,S, and M) mounted on a central rod.

It localises to the cell outer membrane. The protein resides in the bacterial flagellum basal body. In terms of biological role, assembles around the rod to form the L-ring and probably protects the motor/basal body from shearing forces during rotation. The protein is Flagellar L-ring protein of Aliivibrio fischeri (strain ATCC 700601 / ES114) (Vibrio fischeri).